A 620-amino-acid chain; its full sequence is MDSHTLVQALIYLGSAALIVPIAVRLGLGSVLGYLIAGCIIGLWGLRLVTDAESILHFAEIGVVLMLFIIGLELDPQRLWKLRAAVFGGGALQMVICGGLLGLFCMLLGLRWQVAELIGMTLALSSTAIAMQAMNERNLMVTQMGRSAFAVLLFQDIAAILLVAMIPLLAASSASTTMGAFALSALKVAGALVLVVLLGRYVTRPALRFVARSGLREVFSAVALFLVFGFGLLLEEVGLSMAMGAFLAGVLLASSEYRHALESDIEPFKGLLLGLFFIGVGMSIDFGTLIENPLRIVILLLGFLIIKIAMLWLIARPLQVPNKQRRWFAVLLGQGSEFAFVVFGAAQMANVLEPEWAKSLTLAVALSMAATPILLVILNRLEQSSTEEAREADEIDEEQPRVIIAGFGRFGQITGRLLLSSGVKMVVLDHDPDHIETLRKFGMKVFYGDATRMDLLESAGAAKAEVLINAIDDPQTNLQLTEMVKEHFPHLQIIARARDVDHYIRLRQAGVEKPERETFEGALKTGRLALESLGLGPYEARERADVFRRFNIQMVEEMAMVENDTKARAAVYKRTSAMLSEIITEDREHLSLIQRHGWQGTEEGKHTGNMADEPETKPSS.

12 helical membrane passes run 4–24 (HTLV…PIAV), 26–46 (LGLG…LWGL), 54–74 (SILH…GLEL), 90–110 (GALQ…LLGL), 114–134 (VAEL…MQAM), 149–169 (FAVL…IPLL), 178–198 (MGAF…VVLL), 218–238 (VFSA…EEVG), 270–290 (GLLL…GTLI), 294–314 (LRIV…LWLI), 327–347 (WFAV…GAAQ), and 359–379 (SLTL…VILN). Residues 399 to 518 (QPRVIIAGFG…AGVEKPERET (120 aa)) form the RCK N-terminal domain. Residues 597–620 (GWQGTEEGKHTGNMADEPETKPSS) are disordered.

This sequence belongs to the monovalent cation:proton antiporter 2 (CPA2) transporter (TC 2.A.37) family. KefC subfamily. In terms of assembly, homodimer. Interacts with the regulatory subunit KefF.

It localises to the cell inner membrane. Pore-forming subunit of a potassium efflux system that confers protection against electrophiles. Catalyzes K(+)/H(+) antiport. This is Glutathione-regulated potassium-efflux system protein KefC from Shigella flexneri serotype 5b (strain 8401).